The primary structure comprises 649 residues: Probable ADP-ribosylation factor GTPase-activating protein AGD14 (649 aa).

Residues 12–130 enclose the Arf-GAP domain; it reads EKIIRGLMKL…KYAGANDADK (119 aa). A C4-type zinc finger spans residues 27–50; it reads CINCNSLGPQYVCTTFWTFVCMAC. 4 disordered regions span residues 124 to 159, 209 to 279, 294 to 316, and 366 to 391; these read GAND…QSPP, FSNE…VRSV, LGEA…SNHV, and FTPA…SAPK. The span at 127 to 146 shows a compositional bias: basic and acidic residues; it reads DADKPSKDSQDHVSSEDMTR. Positions 150–159 are enriched in low complexity; it reads SYHSYSQSPP. Polar residues-rich tracts occupy residues 248 to 257, 269 to 279, 300 to 315, and 366 to 385; these read PQFQHSNAPP, RTTSSGSVRSV, ESRQ…TSNH, and FTPA…SRPS.

Its function is as follows. GTPase-activating protein (GAP) for ADP ribosylation factor (ARF). This Arabidopsis thaliana (Mouse-ear cress) protein is Probable ADP-ribosylation factor GTPase-activating protein AGD14 (AGD14).